The sequence spans 84 residues: uncharacterized protein (84 aa).

Positions 34–54 are enriched in low complexity; it reads ATSTASSSAAKNTTSSSKNAA. Residues 34 to 57 form a disordered region; the sequence is ATSTASSSAAKNTTSSSKNAAPGM. An N-linked (GlcNAc...) asparagine glycan is attached at N45. A helical transmembrane segment spans residues 66 to 83; the sequence is YGIIMAAFAAVSFVLGTG.

The protein resides in the endoplasmic reticulum membrane. This is an uncharacterized protein from Saccharomyces cerevisiae (strain ATCC 204508 / S288c) (Baker's yeast).